An 85-amino-acid polypeptide reads, in one-letter code: Large ribosomal subunit protein bL27 (85 aa).

Residues 1-22 (MAHKKGQGSSRNGRDSPGQRRG) form a disordered region.

This sequence belongs to the bacterial ribosomal protein bL27 family.

The sequence is that of Large ribosomal subunit protein bL27 from Anaeromyxobacter dehalogenans (strain 2CP-1 / ATCC BAA-258).